The chain runs to 98 residues: DNA-binding protein Fis (98 aa).

Positions 74 to 93 form a DNA-binding region, H-T-H motif; the sequence is QTRAATMLGINRGTLRKKLK.

Belongs to the transcriptional regulatory Fis family. In terms of assembly, homodimer.

In terms of biological role, activates ribosomal RNA transcription. Plays a direct role in upstream activation of rRNA promoters. The polypeptide is DNA-binding protein Fis (Histophilus somni (strain 2336) (Haemophilus somnus)).